The chain runs to 277 residues: Carbonyl reductase [NADPH] 3 (277 aa).

An N-acetylserine modification is found at Ser2. NADP(+)-binding positions include 10–34 (VTGANKGIGFAITRDLCRKFSGDVV), 38–42 (RDEAR), 63–64 (DI), and Asn90. The residue at position 30 (Ser30) is a Phosphoserine. Ser140 is a binding site for substrate. Tyr194 serves as the catalytic Proton acceptor. An NADP(+)-binding site is contributed by 194–198 (YGVSK).

It belongs to the short-chain dehydrogenases/reductases (SDR) family.

Its subcellular location is the cytoplasm. It carries out the reaction a secondary alcohol + NADP(+) = a ketone + NADPH + H(+). The catalysed reaction is a quinone + NADPH + H(+) = a quinol + NADP(+). Catalyzes the NADPH-dependent reduction of carbonyl compounds to their corresponding alcohols. Has low NADPH-dependent oxidoreductase activity. Acts on several orthoquinones, as well as on non-quinone compounds, such as isatin or on the anticancer drug oracin. Best substrates for CBR3 is 1,2- naphthoquinone, hence could play a role in protection against cytotoxicity of exogenous quinones. Exerts activity toward ortho-quinones but not paraquinones. No endogenous substrate for CBR3 except isatin has been identified. The chain is Carbonyl reductase [NADPH] 3 (Cbr3) from Mus musculus (Mouse).